The primary structure comprises 68 residues: Large ribosomal subunit protein bL35 (68 aa).

This sequence belongs to the bacterial ribosomal protein bL35 family.

This chain is Large ribosomal subunit protein bL35, found in Rickettsia canadensis (strain McKiel).